A 137-amino-acid chain; its full sequence is MQNLLKNLATSLGRKPFVADKQGVYRLTIDKHLVMLTPHGSELVLRTPIDAPMLREGNNVNVTLLRSLMQQALAWAKRYPQTLVLDDCGQLVLEARLRLQELDTHGLQEVINKQLALLEHLIPQLTPFSVASRVGWN.

In terms of assembly, interacts with SycN to form a complex which specifically binds to YopN.

The protein resides in the cytoplasm. The protein localises to the cell inner membrane. Its function is as follows. Functions as a specific chaperone for YopN. It could facilitate the secretion and the subsequent translocation of YopN. This is Chaperone protein YscB (yscB) from Yersinia enterocolitica.